Consider the following 483-residue polypeptide: UDP-N-acetylmuramyl-tripeptide synthetase (483 aa).

Ser-43 is a UDP-N-acetyl-alpha-D-muramoyl-L-alanyl-D-glutamate binding site. Residue 116 to 122 participates in ATP binding; it reads GTKGKTT. UDP-N-acetyl-alpha-D-muramoyl-L-alanyl-D-glutamate-binding positions include 160–161, Ser-187, and Arg-195; that span reads TT. Lys-229 is subject to N6-carboxylysine.

Belongs to the MurCDEF family. MurE subfamily. In terms of processing, carboxylation is probably crucial for Mg(2+) binding and, consequently, for the gamma-phosphate positioning of ATP.

The protein resides in the cytoplasm. It participates in cell wall biogenesis; peptidoglycan biosynthesis. Functionally, catalyzes the addition of an amino acid to the nucleotide precursor UDP-N-acetylmuramoyl-L-alanyl-D-glutamate (UMAG) in the biosynthesis of bacterial cell-wall peptidoglycan. The protein is UDP-N-acetylmuramyl-tripeptide synthetase of Lactococcus lactis subsp. cremoris (strain SK11).